The primary structure comprises 34 residues: Photosystem II reaction center protein Psb30 (34 aa).

The chain crosses the membrane as a helical span at residues 5-25 (VLFQLTALIFVVAAGPLVIVL).

It belongs to the Psb30/Ycf12 family. PSII is composed of 1 copy each of membrane proteins PsbA, PsbB, PsbC, PsbD, PsbE, PsbF, PsbH, PsbI, PsbJ, PsbK, PsbL, PsbM, PsbT, PsbX, PsbY, PsbZ, Psb30/Ycf12, peripheral proteins of the oxygen-evolving complex and a large number of cofactors. It forms dimeric complexes.

The protein resides in the plastid. Its subcellular location is the chloroplast thylakoid membrane. Functionally, a core subunit of photosystem II (PSII), probably helps stabilize the reaction center. The sequence is that of Photosystem II reaction center protein Psb30 from Tupiella akineta (Green alga).